The following is a 697-amino-acid chain: MARSHPLERYRNFGIMAHIDAGKTTTTERILYYTGKSYKIGEVHDGAATMDWMEQEQERGITITSAATTCLWKADEGKGPEHRLNIIDTPGHVDFTIEVERSLRVLDGAVAAFDGVAGVEPQSETVWRQADKYKVPRMCFINKLDRTGANFYYCVQTIIDRLGATPAVLYLPIGAESDFKGLVDLVNERAIIWKDESLGAEFFYEDIPADLADKAAEYREKLVELAVEQDDEAMEAYLEGNVPDVATLKKLIRKGTLNQAFVPVLCGSAFKNKGVQPLLDAVVDYLPSPLDIPDVQGINPTTEQPDSRATSDSAPLSMLAFKIMNDPFVGSLTFARIYSGTLTKGSYLNSVKDKKEKIGRMLLMHANSREDIEEAFAGDIVALAGLKETTTGDTLCASNAPIILERMEFPEPVIELSVEPKTKADQEKMGIALSRLAAEDPSFRVSTDHESGQTIIKGMGELHLDILVDRMKREFKVEANVGAPQVAYRESLAKPVDVDYTHKKQSGGSGQFGRVKVSVAPGERGSGITFIDEIKGGNIPREYIPSVEKGMREAAENGHMIGFPIIDFEIRLTDGAYHDVDSSALAFEIAGRAAMREVAAKAGIKLLEPVMKVEVVTPEEFMGDVIGDLNSRRGQIQGTDSRGNAQVVEAMVPLANMFGYVNQLRSFTQGRAQYTMQFSHYEEVPNNVAEEVKAKMA.

Positions 8 to 290 constitute a tr-type G domain; it reads ERYRNFGIMA…AVVDYLPSPL (283 aa). GTP is bound by residues 17-24, 88-92, and 142-145; these read AHIDAGKT, DTPGH, and NKLD.

This sequence belongs to the TRAFAC class translation factor GTPase superfamily. Classic translation factor GTPase family. EF-G/EF-2 subfamily.

It is found in the cytoplasm. Functionally, catalyzes the GTP-dependent ribosomal translocation step during translation elongation. During this step, the ribosome changes from the pre-translocational (PRE) to the post-translocational (POST) state as the newly formed A-site-bound peptidyl-tRNA and P-site-bound deacylated tRNA move to the P and E sites, respectively. Catalyzes the coordinated movement of the two tRNA molecules, the mRNA and conformational changes in the ribosome. The polypeptide is Elongation factor G (Sphingopyxis alaskensis (strain DSM 13593 / LMG 18877 / RB2256) (Sphingomonas alaskensis)).